The following is a 422-amino-acid chain: Histidine--tRNA ligase (422 aa).

The protein belongs to the class-II aminoacyl-tRNA synthetase family. As to quaternary structure, homodimer.

It is found in the cytoplasm. The catalysed reaction is tRNA(His) + L-histidine + ATP = L-histidyl-tRNA(His) + AMP + diphosphate + H(+). In Ruthia magnifica subsp. Calyptogena magnifica, this protein is Histidine--tRNA ligase.